The sequence spans 523 residues: Glycerate kinase (523 aa).

Serine 60 bears the Phosphoserine mark. Lysine 200 bears the N6-acetyllysine mark.

Belongs to the glycerate kinase type-2 family.

Its subcellular location is the cytoplasm. The enzyme catalyses (R)-glycerate + ATP = (2R)-3-phosphoglycerate + ADP + H(+). This is Glycerate kinase (Glyctk) from Rattus norvegicus (Rat).